The sequence spans 589 residues: Aspartate--tRNA ligase (589 aa).

Residue E172 participates in L-aspartate binding. The interval Q196 to K199 is aspartate. R218 provides a ligand contact to L-aspartate. Residues R218–E220 and Q227 each bind ATP. H449 serves as a coordination point for L-aspartate. E483 is a binding site for ATP. Position 490 (R490) interacts with L-aspartate. G535–R538 is a binding site for ATP.

Belongs to the class-II aminoacyl-tRNA synthetase family. Type 1 subfamily. In terms of assembly, homodimer.

The protein resides in the cytoplasm. The catalysed reaction is tRNA(Asp) + L-aspartate + ATP = L-aspartyl-tRNA(Asp) + AMP + diphosphate. Functionally, catalyzes the attachment of L-aspartate to tRNA(Asp) in a two-step reaction: L-aspartate is first activated by ATP to form Asp-AMP and then transferred to the acceptor end of tRNA(Asp). This Actinobacillus succinogenes (strain ATCC 55618 / DSM 22257 / CCUG 43843 / 130Z) protein is Aspartate--tRNA ligase.